We begin with the raw amino-acid sequence, 282 residues long: Predicted GPI-anchored protein 23 (282 aa).

The N-terminal stretch at 1–18 is a signal peptide; that stretch reads MRVSTLVLSTSIIPIATA. The disordered stretch occupies residues 163 to 264; it reads GQETSGAGSL…SSNSSSSAGM (102 aa). N-linked (GlcNAc...) asparagine glycans are attached at residues N180, N192, and N257. The segment covering 186-216 has biased composition (gly residues); sequence GGSGSSNGTSSGSGSGSGAGVGSGSGSGSGS. Over residues 236-264 the composition is skewed to low complexity; sequence LGISSSISQSTTRQLQTSGSSNSSSSAGM. S259 carries GPI-anchor amidated serine lipidation. The propeptide at 260–282 is removed in mature form; that stretch reads SSAGMGNVVVGMNAVALAALVLI.

It is found in the cell membrane. In terms of biological role, probable cell surface protein involved in the process of adhesion and early events of invasion. The sequence is that of Predicted GPI-anchored protein 23 (PGA23) from Candida albicans (strain SC5314 / ATCC MYA-2876) (Yeast).